A 483-amino-acid polypeptide reads, in one-letter code: UDP-N-acetylmuramoyl-L-alanyl-D-glutamate--2,6-diaminopimelate ligase (483 aa).

S30 contributes to the UDP-N-acetyl-alpha-D-muramoyl-L-alanyl-D-glutamate binding site. Position 109–115 (109–115 (GTNGKTT)) interacts with ATP. UDP-N-acetyl-alpha-D-muramoyl-L-alanyl-D-glutamate contacts are provided by residues 151-152 (TT), S178, and R186. Residue K218 is modified to N6-carboxylysine. Residues R380, 403-406 (DNPR), G453, and E457 contribute to the meso-2,6-diaminopimelate site. Positions 403-406 (DNPR) match the Meso-diaminopimelate recognition motif motif.

This sequence belongs to the MurCDEF family. MurE subfamily. Requires Mg(2+) as cofactor. In terms of processing, carboxylation is probably crucial for Mg(2+) binding and, consequently, for the gamma-phosphate positioning of ATP.

It is found in the cytoplasm. It carries out the reaction UDP-N-acetyl-alpha-D-muramoyl-L-alanyl-D-glutamate + meso-2,6-diaminopimelate + ATP = UDP-N-acetyl-alpha-D-muramoyl-L-alanyl-gamma-D-glutamyl-meso-2,6-diaminopimelate + ADP + phosphate + H(+). The protein operates within cell wall biogenesis; peptidoglycan biosynthesis. Its function is as follows. Catalyzes the addition of meso-diaminopimelic acid to the nucleotide precursor UDP-N-acetylmuramoyl-L-alanyl-D-glutamate (UMAG) in the biosynthesis of bacterial cell-wall peptidoglycan. The sequence is that of UDP-N-acetylmuramoyl-L-alanyl-D-glutamate--2,6-diaminopimelate ligase from Chlamydia muridarum (strain MoPn / Nigg).